We begin with the raw amino-acid sequence, 285 residues long: Nucleotide-binding protein Geob_2284 (285 aa).

8–15 is a binding site for ATP; it reads GLSGSGKS. Residue 59-62 participates in GTP binding; it reads DIRG.

Belongs to the RapZ-like family.

Its function is as follows. Displays ATPase and GTPase activities. This chain is Nucleotide-binding protein Geob_2284, found in Geotalea daltonii (strain DSM 22248 / JCM 15807 / FRC-32) (Geobacter daltonii).